We begin with the raw amino-acid sequence, 316 residues long: Olfactory receptor 2H1 (316 aa).

Residues methionine 1–arginine 23 lie on the Extracellular side of the membrane. A glycan (N-linked (GlcNAc...) asparagine) is linked at asparagine 3. The helical transmembrane segment at threonine 24 to serine 47 threads the bilayer. Topologically, residues valine 48 to serine 55 are cytoplasmic. A helical membrane pass occupies residues proline 56–proline 77. At glutamine 78–glutamine 98 the chain is on the extracellular side. Cysteine 95 and cysteine 187 are joined by a disulfide. The helical transmembrane segment at leucine 99–phenylalanine 118 threads the bilayer. At aspartate 119–arginine 137 the chain is on the cytoplasmic side. Residues leucine 138 to valine 156 traverse the membrane as a helical segment. Over glutamine 157–asparagine 193 the chain is Extracellular. The chain crosses the membrane as a helical span at residues glutamate 194–glycine 217. Residues alanine 218–lysine 234 lie on the Cytoplasmic side of the membrane. Residues alanine 235–tyrosine 257 form a helical membrane-spanning segment. Residues leucine 258–lysine 270 lie on the Extracellular side of the membrane. A helical membrane pass occupies residues phenylalanine 271 to leucine 290. The Cytoplasmic portion of the chain corresponds to arginine 291–alanine 316.

Belongs to the G-protein coupled receptor 1 family.

It localises to the cell membrane. Odorant receptor. In Homo sapiens (Human), this protein is Olfactory receptor 2H1 (OR2H1).